The chain runs to 70 residues: Large ribosomal subunit protein bL31 (70 aa).

Positions 16, 18, 37, and 40 each coordinate Zn(2+).

Belongs to the bacterial ribosomal protein bL31 family. Type A subfamily. Part of the 50S ribosomal subunit. The cofactor is Zn(2+).

Binds the 23S rRNA. The chain is Large ribosomal subunit protein bL31 from Actinobacillus pleuropneumoniae serotype 5b (strain L20).